The sequence spans 964 residues: Glycine dehydrogenase (decarboxylating) (964 aa).

Over residues 1 to 10 (MNSTLQNRNR) the composition is skewed to polar residues. The disordered stretch occupies residues 1–25 (MNSTLQNRNRTNLERVSTDPLDTFP). Lys713 is subject to N6-(pyridoxal phosphate)lysine.

Belongs to the GcvP family. In terms of assembly, the glycine cleavage system is composed of four proteins: P, T, L and H. It depends on pyridoxal 5'-phosphate as a cofactor.

It catalyses the reaction N(6)-[(R)-lipoyl]-L-lysyl-[glycine-cleavage complex H protein] + glycine + H(+) = N(6)-[(R)-S(8)-aminomethyldihydrolipoyl]-L-lysyl-[glycine-cleavage complex H protein] + CO2. Functionally, the glycine cleavage system catalyzes the degradation of glycine. The P protein binds the alpha-amino group of glycine through its pyridoxal phosphate cofactor; CO(2) is released and the remaining methylamine moiety is then transferred to the lipoamide cofactor of the H protein. The chain is Glycine dehydrogenase (decarboxylating) from Leptospira borgpetersenii serovar Hardjo-bovis (strain JB197).